Reading from the N-terminus, the 280-residue chain is Elongation factor Ts (280 aa).

The interval 79 to 82 is involved in Mg(2+) ion dislocation from EF-Tu; it reads TDFV.

The protein belongs to the EF-Ts family.

It is found in the cytoplasm. Its function is as follows. Associates with the EF-Tu.GDP complex and induces the exchange of GDP to GTP. It remains bound to the aminoacyl-tRNA.EF-Tu.GTP complex up to the GTP hydrolysis stage on the ribosome. The protein is Elongation factor Ts of Vibrio vulnificus (strain CMCP6).